Consider the following 553-residue polypeptide: Pseudouridylate synthase RPUSD2 (553 aa).

The tract at residues 76 to 135 (AVGKQVPESGDQAQGGEGQLPSNGEQTPAPVADSGKRKKRRGATGERVVPPPKKRRTGVS) is disordered. Asp-287 is a catalytic residue. Residue Thr-490 is modified to Phosphothreonine.

The protein belongs to the pseudouridine synthase RluA family.

The catalysed reaction is a uridine in mRNA = a pseudouridine in mRNA. Its function is as follows. Pseudouridine synthase that catalyzes pseudouridylation of mRNAs. In Mus musculus (Mouse), this protein is Pseudouridylate synthase RPUSD2.